A 513-amino-acid chain; its full sequence is ATP synthase subunit alpha (513 aa).

ATP is bound at residue 169–176 (GDRQTGKT).

It belongs to the ATPase alpha/beta chains family. In terms of assembly, F-type ATPases have 2 components, CF(1) - the catalytic core - and CF(0) - the membrane proton channel. CF(1) has five subunits: alpha(3), beta(3), gamma(1), delta(1), epsilon(1). CF(0) has three main subunits: a(1), b(2) and c(9-12). The alpha and beta chains form an alternating ring which encloses part of the gamma chain. CF(1) is attached to CF(0) by a central stalk formed by the gamma and epsilon chains, while a peripheral stalk is formed by the delta and b chains.

The protein localises to the cell inner membrane. The catalysed reaction is ATP + H2O + 4 H(+)(in) = ADP + phosphate + 5 H(+)(out). Its function is as follows. Produces ATP from ADP in the presence of a proton gradient across the membrane. The alpha chain is a regulatory subunit. The sequence is that of ATP synthase subunit alpha from Salmonella agona (strain SL483).